The sequence spans 210 residues: High frequency lysogenization protein HflD homolog (210 aa).

Residues 103–130 (EAKAKLAERLQQIERQLPLYENDIMADQ) adopt a coiled-coil conformation.

This sequence belongs to the HflD family.

It localises to the cytoplasm. Its subcellular location is the cell inner membrane. This Actinobacillus pleuropneumoniae serotype 3 (strain JL03) protein is High frequency lysogenization protein HflD homolog.